Here is a 462-residue protein sequence, read N- to C-terminus: Lysophospholipid acyltransferase 1 (462 aa).

9 helical membrane passes run 9-29, 52-72, 84-104, 158-178, 211-231, 263-283, 353-373, 396-416, and 431-451; these read SIGV…TIPV, FLSY…PMTI, CGII…VFYM, SLIE…GPVY, AILQ…QYPL, YFIW…FSGW, AVWH…ALMI, IMVF…AVGF, and VYYI…VVPA. The active site involves H356.

Belongs to the membrane-bound acyltransferase family. In terms of tissue distribution, expressed in roots, rosette leaves, petals, stigma, chalazal endosperm of developing seeds and vascular bundles of siliques.

It is found in the endoplasmic reticulum membrane. The enzyme catalyses a 1-acyl-sn-glycero-3-phosphocholine + an acyl-CoA = a 1,2-diacyl-sn-glycero-3-phosphocholine + CoA. The catalysed reaction is 1-(9Z-octadecenoyl)-sn-glycero-3-phosphocholine + (9Z)-octadecenoyl-CoA = 1,2-di-(9Z-octadecenoyl)-sn-glycero-3-phosphocholine + CoA. It catalyses the reaction 1-(9Z-octadecenoyl)-sn-glycero-3-phosphocholine + (9Z,12Z)-octadecadienoyl-CoA = 1-(9Z)-octadecenoyl-2-(9Z,12Z)-octadecadienoyl-sn-glycero-3-phosphocholine + CoA. It carries out the reaction (9Z,12Z,15Z)-octadecatrienoyl-CoA + 1-(9Z-octadecenoyl)-sn-glycero-3-phosphocholine = 1-(9Z-octadecaenoyl)-2-(9Z,12Z,15Z-octadecatrienoyl)-sn-glycero-3-phosphocholine + CoA. The enzyme catalyses a 1-acyl-sn-glycero-3-phosphoethanolamine + an acyl-CoA = a 1,2-diacyl-sn-glycero-3-phosphoethanolamine + CoA. The catalysed reaction is a 1-acyl-sn-glycero-3-phospho-L-serine + an acyl-CoA = a 1,2-diacyl-sn-glycero-3-phospho-L-serine + CoA. Its function is as follows. Lysophospholipid acyltransferase with broad specificity. Mediates the conversion of lysophosphatidylethanolamine (1-acyl-sn-glycero-3-phosphoethanolamine or LPE) into phosphatidylethanolamine (1,2-diacyl-sn-glycero-3-phosphoethanolamine or PE) (LPEAT activity). Catalyzes the acylation of lysophosphatidylserine (1-acyl-2-hydroxy-sn-glycero-3-phospho-L-serine or LPS) into phosphatidylserine (1,2-diacyl-sn-glycero-3-phospho-L-serine or PS) (LPSAT activity). Can convert lysophosphatidylcholine (1-acyl-sn-glycero-3-phosphocholine or LPC) into phosphatidylcholine (1,2-diacyl-sn-glycero-3-phosphocholine or PC) (LPCAT activity). Exhibits preference for C18-unsaturated acyl-CoA when transferring an acyl group to lysophosphatidylcholine. Can also utilize lysophosphatidylglycerol (LPG) as substrate in vitro. Has neither activity towards lysophosphatidic acid (LPA) nor lysophosphatidylinositol (LPI). Lysophospholipid acyltransferases catalyze the reacylation step of the phospholipid remodeling pathway also known as the Lands cycle. The primary function of the Lands cycle is to provide a route for acyl remodeling to modify fatty acid (FA) composition of phospholipids derived from the Kennedy pathway. Is involved in PC acyl editing and phosphocholine headgroup exchange between PC and diacylglycerols. This processes control the majority of acyl fluxes through PC to provide polyunsaturated fatty acids for triacylglycerols synthesis in seeds. Involved with LPCAT2 in the direct incorporation of newly synthesized fatty acids exported form the chloroplast into PC through acyl editing. In Arabidopsis thaliana (Mouse-ear cress), this protein is Lysophospholipid acyltransferase 1.